The sequence spans 366 residues: Sulfite reductase, dissimilatory-type subunit beta (366 aa).

Residues cysteine 140, cysteine 177, cysteine 178, cysteine 182, cysteine 220, cysteine 241, cysteine 244, and cysteine 247 each coordinate [4Fe-4S] cluster. Cysteine 182 provides a ligand contact to siroheme. Residues 232–262 form the 4Fe-4S ferredoxin-type domain; it reads KTIKVDVEKCMYCGNCYTMCPGMPLFDPEND.

As to quaternary structure, heterotetramer of two alpha and two beta subunits. The cofactor is [4Fe-4S] cluster. Siroheme is required as a cofactor.

The protein localises to the membrane. The catalysed reaction is [DsrC protein]-trisulfide + NAD(+) + 3 H2O = [DsrC protein]-dithiol + sulfite + NADH + 3 H(+). Functionally, catalyzes the reduction of sulfite to sulfide. This is the terminal oxidation reaction in sulfate respiration. This is Sulfite reductase, dissimilatory-type subunit beta (dsrB) from Archaeoglobus fulgidus (strain ATCC 49558 / DSM 4304 / JCM 9628 / NBRC 100126 / VC-16).